A 232-amino-acid chain; its full sequence is Ubiquinone biosynthesis O-methyltransferase (232 aa).

S-adenosyl-L-methionine-binding residues include R36, G55, D76, and L120.

This sequence belongs to the methyltransferase superfamily. UbiG/COQ3 family.

The enzyme catalyses a 3-demethylubiquinol + S-adenosyl-L-methionine = a ubiquinol + S-adenosyl-L-homocysteine + H(+). It catalyses the reaction a 3-(all-trans-polyprenyl)benzene-1,2-diol + S-adenosyl-L-methionine = a 2-methoxy-6-(all-trans-polyprenyl)phenol + S-adenosyl-L-homocysteine + H(+). It participates in cofactor biosynthesis; ubiquinone biosynthesis. Its function is as follows. O-methyltransferase that catalyzes the 2 O-methylation steps in the ubiquinone biosynthetic pathway. This Pseudomonas aeruginosa (strain ATCC 15692 / DSM 22644 / CIP 104116 / JCM 14847 / LMG 12228 / 1C / PRS 101 / PAO1) protein is Ubiquinone biosynthesis O-methyltransferase.